The chain runs to 431 residues: UPF0597 protein LCA_0156 (431 aa).

It belongs to the UPF0597 family.

This chain is UPF0597 protein LCA_0156, found in Latilactobacillus sakei subsp. sakei (strain 23K) (Lactobacillus sakei subsp. sakei).